The following is a 504-amino-acid chain: MKKYVMALDQGTTSSRAILFDYEGKIVATSQKEFTQIYPKAGWVEHDPMEIWGTQSGVAREVLERMAISPQDIAAIGITNQRETTIVWDKNTGKPVYNAIVWQCRRTAAICDELKTQGMADYIRENTGLVLDAYFSGTKIKWILDHVEGAKEKAEKGELLFGTVDSWLIWNLTRGKVHVTDYSNASRTMLYNIKQLKWDDKILKALEIPKSMLPEVKESSAIYGYTDHQTFGGADIPIAGAAGDQQAALFGQGCFKEGMGKNTYGTGCFMLMNTGDQFVQSKNGLLTTLAWGIDGKVEYALEGSIFVAGASVQWLRDELKIIRDAEDTEYLAKKVPNSNGVYVVPAFTGMGAPYWDMYARGAIVGLTRGAKAEHIIRATLESIAYQTRDVLEAMEQDSGIQLKSLKVDGGAAMNNFLMQFQADILSVPVDRPKITETTALGAAYLAGLAVGFWKDKNEIESKWSVDTVFEPGMDHEEKERLYKGWKRAVNRALKWEEENELDVK.

T12 contributes to the ADP binding site. 3 residues coordinate ATP: T12, T13, and S14. Position 12 (T12) interacts with sn-glycerol 3-phosphate. Position 16 (R16) interacts with ADP. Residues R82, E83, Y134, and D244 each contribute to the sn-glycerol 3-phosphate site. Glycerol-binding residues include R82, E83, Y134, D244, and Q245. T266 and G309 together coordinate ADP. ATP-binding residues include T266, G309, Q313, and G410. The ADP site is built by G410 and N414.

It belongs to the FGGY kinase family. As to quaternary structure, homotetramer and homodimer (in equilibrium).

It carries out the reaction glycerol + ATP = sn-glycerol 3-phosphate + ADP + H(+). The protein operates within polyol metabolism; glycerol degradation via glycerol kinase pathway; sn-glycerol 3-phosphate from glycerol: step 1/1. Activated by phosphorylation and inhibited by fructose 1,6-bisphosphate (FBP). In terms of biological role, key enzyme in the regulation of glycerol uptake and metabolism. Catalyzes the phosphorylation of glycerol to yield sn-glycerol 3-phosphate. This is Glycerol kinase from Alkaliphilus oremlandii (strain OhILAs) (Clostridium oremlandii (strain OhILAs)).